The sequence spans 390 residues: Galactokinase (390 aa).

35–38 lines the substrate pocket; sequence EHTD. 125 to 131 contributes to the ATP binding site; sequence GAGLSSS. Mg(2+) contacts are provided by Ser131 and Glu163. The Proton acceptor role is filled by Asp175. Tyr224 is a substrate binding site.

Belongs to the GHMP kinase family. GalK subfamily.

The protein resides in the cytoplasm. The enzyme catalyses alpha-D-galactose + ATP = alpha-D-galactose 1-phosphate + ADP + H(+). It functions in the pathway carbohydrate metabolism; galactose metabolism. Catalyzes the transfer of the gamma-phosphate of ATP to D-galactose to form alpha-D-galactose-1-phosphate (Gal-1-P). The chain is Galactokinase from Proteus mirabilis (strain HI4320).